Here is a 136-residue protein sequence, read N- to C-terminus: Methylglyoxal synthase (136 aa).

Residues 1 to 136 (MKIALIAHDR…REVVREENEA (136 aa)) form the MGS-like domain. Substrate-binding positions include His-8, Lys-12, 34–37 (TGTT), and 54–55 (SG). The active-site Proton donor/acceptor is the Asp-60. Residue His-87 participates in substrate binding.

The protein belongs to the methylglyoxal synthase family.

The catalysed reaction is dihydroxyacetone phosphate = methylglyoxal + phosphate. Functionally, catalyzes the formation of methylglyoxal from dihydroxyacetone phosphate. In Brevibacillus brevis (strain 47 / JCM 6285 / NBRC 100599), this protein is Methylglyoxal synthase.